The primary structure comprises 555 residues: Alpha-1,2-mannosyltransferase ALG9 (555 aa).

The Cytoplasmic segment spans residues 1-7 (MNCKAVT). Residues 8–28 (ISLLLLLFLTRVYIQPTFSLI) traverse the membrane as a helical segment. The Lumenal segment spans residues 29-62 (SDCDETFNYWEPLNLLVRGFGKQTWEYSPEYSIR). Residues 63–83 (SWAFLLPFYCILYPVNKFTDL) traverse the membrane as a helical segment. The Cytoplasmic portion of the chain corresponds to 84–86 (ESH). The helical transmembrane segment at 87-107 (WNFFITRACLGFFSFIMEFKL) threads the bilayer. The Lumenal portion of the chain corresponds to 108-113 (HREIAG). Residues 114–134 (SLALQIANIWIIFQLFNPGWF) traverse the membrane as a helical segment. The Cytoplasmic portion of the chain corresponds to 135–176 (HASVELLPSAVAMLLYVGATRHSLRYLSTGSTSNFTKSLAYN). The chain crosses the membrane as a helical span at residues 177-197 (FLASILGWPFVLILSLPLCLH). Residues 198-213 (YLFNHRIISTIRTAFD) lie on the Lumenal side of the membrane. Residues 214 to 234 (CCLIFSLTAFAVIVTDSIFYG) form a helical membrane-spanning segment. Residues 235–268 (KLAPVSWNILFYNVINASEESGPNIFGVEPWYYY) lie on the Cytoplasmic side of the membrane. Residues 269–289 (PLNLLLNFPLPVLVLAILGIF) traverse the membrane as a helical segment. At 290–316 (HLRLWPLWASLFTWIAVFTQQPHKEER) the chain is on the lumenal side. The chain crosses the membrane as a helical span at residues 317–337 (FLYPIYGLITLSASIAFYKVL). Residues 338–349 (NLFNRKPILKKG) lie on the Cytoplasmic side of the membrane. Residues 350–370 (IKLSVLLIVAGQAMSRIVALV) traverse the membrane as a helical segment. Over 371–555 (NNYTAPIAVY…LFEKPTETTN (185 aa)) the chain is Lumenal.

Belongs to the glycosyltransferase 22 family.

It is found in the endoplasmic reticulum membrane. The catalysed reaction is an alpha-D-Man-(1-&gt;2)-alpha-D-Man-(1-&gt;2)-alpha-D-Man-(1-&gt;3)-[alpha-D-Man-(1-&gt;3)-alpha-D-Man-(1-&gt;6)]-beta-D-Man-(1-&gt;4)-beta-D-GlcNAc-(1-&gt;4)-alpha-D-GlcNAc-diphospho-di-trans,poly-cis-dolichol + a di-trans,poly-cis-dolichyl beta-D-mannosyl phosphate = an alpha-D-Man-(1-&gt;2)-alpha-D-Man-(1-&gt;2)-alpha-D-Man-(1-&gt;3)-[alpha-D-Man-(1-&gt;2)-alpha-D-Man-(1-&gt;3)-alpha-D-Man-(1-&gt;6)]-beta-D-Man-(1-&gt;4)-beta-D-GlcNAc-(1-&gt;4)-alpha-D-GlcNAc-diphospho-di-trans,poly-cis-dolichol + a di-trans,poly-cis-dolichyl phosphate + H(+). It carries out the reaction an alpha-D-Man-(1-&gt;2)-alpha-D-Man-(1-&gt;2)-alpha-D-Man-(1-&gt;3)-[alpha-D-Man-(1-&gt;2)-alpha-D-Man-(1-&gt;3)-[alpha-D-Man-(1-&gt;6)]-alpha-D-Man-(1-&gt;6)]-beta-D-Man-(1-&gt;4)-beta-D-GlcNAc-(1-&gt;4)-alpha-D-GlcNAc-diphospho-di-trans,poly-cis-dolichol + a di-trans,poly-cis-dolichyl beta-D-mannosyl phosphate = an alpha-D-Man-(1-&gt;2)-alpha-D-Man-(1-&gt;2)-alpha-D-Man-(1-&gt;3)-[alpha-D-Man-(1-&gt;2)-alpha-D-Man-(1-&gt;3)-[alpha-D-Man-(1-&gt;2)-alpha-D-Man-(1-&gt;6)]-alpha-D-Man-(1-&gt;6)]-beta-D-Man-(1-&gt;4)-beta-D-GlcNAc-(1-&gt;4)-alpha-D-GlcNAc-diphospho-di-trans,poly-cis-dolichol + a di-trans,poly-cis-dolichyl phosphate + H(+). The protein operates within protein modification; protein glycosylation. In terms of biological role, mannosyltransferase that operates in the biosynthetic pathway of dolichol-linked oligosaccharides, the glycan precursors employed in protein asparagine (N)-glycosylation. The assembly of dolichol-linked oligosaccharides begins on the cytosolic side of the endoplasmic reticulum membrane and finishes in its lumen. The sequential addition of sugars to dolichol pyrophosphate produces dolichol-linked oligosaccharides containing fourteen sugars, including two GlcNAcs, nine mannoses and three glucoses. Once assembled, the oligosaccharide is transferred from the lipid to nascent proteins by oligosaccharyltransferases. In the lumen of the endoplasmic reticulum, catalyzes the addition of the seventh and ninth alpha-1,2-linked mannose residues to Man(6)GlcNAc(2)-PP-dolichol and Man(8)GlcNAc(2)-PP-dolichol respectively. The chain is Alpha-1,2-mannosyltransferase ALG9 (ALG9) from Saccharomyces cerevisiae (strain ATCC 204508 / S288c) (Baker's yeast).